We begin with the raw amino-acid sequence, 366 residues long: Quinolinate synthase (366 aa).

Residues His44 and Ser61 each contribute to the iminosuccinate site. Cys108 lines the [4Fe-4S] cluster pocket. Residues 139-141 (YIN) and Ser160 each bind iminosuccinate. Cys228 serves as a coordination point for [4Fe-4S] cluster. Iminosuccinate contacts are provided by residues 254–256 (HPE) and Thr271. [4Fe-4S] cluster is bound at residue Cys318.

The protein belongs to the quinolinate synthase family. Type 3 subfamily. It depends on [4Fe-4S] cluster as a cofactor.

It is found in the cytoplasm. The enzyme catalyses iminosuccinate + dihydroxyacetone phosphate = quinolinate + phosphate + 2 H2O + H(+). It participates in cofactor biosynthesis; NAD(+) biosynthesis; quinolinate from iminoaspartate: step 1/1. Its function is as follows. Catalyzes the condensation of iminoaspartate with dihydroxyacetone phosphate to form quinolinate. The polypeptide is Quinolinate synthase (Listeria monocytogenes serotype 4b (strain F2365)).